We begin with the raw amino-acid sequence, 70 residues long: ATP synthase subunit c (70 aa).

The next 2 membrane-spanning stretches (helical) occupy residues alanine 5–valine 25 and phenylalanine 47–valine 67.

This sequence belongs to the ATPase C chain family. In terms of assembly, F-type ATPases have 2 components, F(1) - the catalytic core - and F(0) - the membrane proton channel. F(1) has five subunits: alpha(3), beta(3), gamma(1), delta(1), epsilon(1). F(0) has three main subunits: a(1), b(2) and c(10-14). The alpha and beta chains form an alternating ring which encloses part of the gamma chain. F(1) is attached to F(0) by a central stalk formed by the gamma and epsilon chains, while a peripheral stalk is formed by the delta and b chains.

It localises to the cell membrane. Functionally, f(1)F(0) ATP synthase produces ATP from ADP in the presence of a proton or sodium gradient. F-type ATPases consist of two structural domains, F(1) containing the extramembraneous catalytic core and F(0) containing the membrane proton channel, linked together by a central stalk and a peripheral stalk. During catalysis, ATP synthesis in the catalytic domain of F(1) is coupled via a rotary mechanism of the central stalk subunits to proton translocation. Key component of the F(0) channel; it plays a direct role in translocation across the membrane. A homomeric c-ring of between 10-14 subunits forms the central stalk rotor element with the F(1) delta and epsilon subunits. The polypeptide is ATP synthase subunit c (Anoxybacillus flavithermus (strain DSM 21510 / WK1)).